A 330-amino-acid polypeptide reads, in one-letter code: Ketol-acid reductoisomerase (NADP(+)) (330 aa).

Positions A2–T182 constitute a KARI N-terminal Rossmann domain. NADP(+)-binding positions include Y25 to Q28, S51, S53, and D83 to Q86. H108 is an active-site residue. G134 is a binding site for NADP(+). The 146-residue stretch at S183–L328 folds into the KARI C-terminal knotted domain. D191, E195, E227, and E231 together coordinate Mg(2+). S252 is a binding site for substrate.

It belongs to the ketol-acid reductoisomerase family. It depends on Mg(2+) as a cofactor.

The catalysed reaction is (2R)-2,3-dihydroxy-3-methylbutanoate + NADP(+) = (2S)-2-acetolactate + NADPH + H(+). The enzyme catalyses (2R,3R)-2,3-dihydroxy-3-methylpentanoate + NADP(+) = (S)-2-ethyl-2-hydroxy-3-oxobutanoate + NADPH + H(+). Its pathway is amino-acid biosynthesis; L-isoleucine biosynthesis; L-isoleucine from 2-oxobutanoate: step 2/4. It functions in the pathway amino-acid biosynthesis; L-valine biosynthesis; L-valine from pyruvate: step 2/4. In terms of biological role, involved in the biosynthesis of branched-chain amino acids (BCAA). Catalyzes an alkyl-migration followed by a ketol-acid reduction of (S)-2-acetolactate (S2AL) to yield (R)-2,3-dihydroxy-isovalerate. In the isomerase reaction, S2AL is rearranged via a Mg-dependent methyl migration to produce 3-hydroxy-3-methyl-2-ketobutyrate (HMKB). In the reductase reaction, this 2-ketoacid undergoes a metal-dependent reduction by NADPH to yield (R)-2,3-dihydroxy-isovalerate. The sequence is that of Ketol-acid reductoisomerase (NADP(+)) from Synechococcus sp. (strain ATCC 27144 / PCC 6301 / SAUG 1402/1) (Anacystis nidulans).